The following is a 468-amino-acid chain: UDP-N-acetylmuramate--L-alanine ligase (468 aa).

114–120 (GTHGKTT) contacts ATP.

This sequence belongs to the MurCDEF family.

It is found in the cytoplasm. The enzyme catalyses UDP-N-acetyl-alpha-D-muramate + L-alanine + ATP = UDP-N-acetyl-alpha-D-muramoyl-L-alanine + ADP + phosphate + H(+). Its pathway is cell wall biogenesis; peptidoglycan biosynthesis. Its function is as follows. Cell wall formation. This Methylorubrum populi (strain ATCC BAA-705 / NCIMB 13946 / BJ001) (Methylobacterium populi) protein is UDP-N-acetylmuramate--L-alanine ligase.